The following is a 634-amino-acid chain: E3 ubiquitin/ISG15 ligase TRIM25 (634 aa).

The segment at 13-54 adopts an RING-type zinc-finger fold; that stretch reads CSVCLELFKEPVTTPCGHNFCMSCLDETWVVQGPPYRCPQCR. Thr90 is modified (phosphothreonine). At Ser99 the chain carries Phosphoserine. Lys116 participates in a covalent cross-link: Glycyl lysine isopeptide (Lys-Gly) (interchain with G-Cter in ISG15). Positions 215 to 305 form a coiled coil; sequence ATKALEDVRS…LIMDKGDEFE (91 aa). Lys272 carries the post-translational modification N6-acetyllysine. A Phosphotyrosine modification is found at Tyr277. The segment at 353–437 is disordered; that stretch reads KLQKKSEEHN…APKASAAQPD (85 aa). The segment covering 363–376 has biased composition (polar residues); that stretch reads GSGNKGDQTQSTFK. A B30.2/SPRY domain is found at 444–634; that stretch reads KVLENFLTKS…AGTTLSICSK (191 aa). The residue at position 572 (Lys572) is an N6-acetyllysine.

Forms homodimers. Interacts (via SPRY domain) with RIGI (via CARD domain). Interacts with ZFHX3. Interacts with NLRP12; this interaction reduces the E3 ubiquitin ligase TRIM25-mediated 'Lys-63'-linked RIGI activation. Interacts with the KHDC3L/FILIA-OOEP/FLOPED scaffold complex and BLM at DNA replication forks. Interacts with RTN3; this interaction prevents RIGI ubiquitination. Interacts with YWHAE. Auto-ISGylated. As to expression, ubiquitous.

It is found in the cytoplasm. The protein localises to the stress granule. It localises to the nucleus. The enzyme catalyses S-ubiquitinyl-[E2 ubiquitin-conjugating enzyme]-L-cysteine + [acceptor protein]-L-lysine = [E2 ubiquitin-conjugating enzyme]-L-cysteine + N(6)-ubiquitinyl-[acceptor protein]-L-lysine.. It carries out the reaction ATP + [ISG15] + [protein]-lysine = AMP + diphosphate + [protein]-N-ISGyllysine.. It participates in protein modification; protein ubiquitination. In terms of biological role, functions as a ubiquitin E3 ligase and as an ISG15 E3 ligase. Involved in innate immune defense against viruses by mediating ubiquitination of RIGI and IFIH1. Mediates 'Lys-63'-linked polyubiquitination of the RIGI N-terminal CARD-like region and may play a role in signal transduction that leads to the production of interferons in response to viral infection. Mediates 'Lys-63'-linked polyubiquitination of IFIH1. Promotes ISGylation of 14-3-3 sigma (SFN), an adapter protein implicated in the regulation of a large spectrum signaling pathway. Mediates estrogen action in various target organs. Mediates the ubiquitination and subsequent proteasomal degradation of ZFHX3. Plays a role in promoting the restart of stalled replication forks via interaction with the KHDC3L-OOEP scaffold and subsequent ubiquitination of BLM, resulting in the recruitment and retainment of BLM at DNA replication forks. Plays an essential role in the antiviral activity of ZAP/ZC3HAV1; an antiviral protein which inhibits the replication of certain viruses. Mechanistically, mediates 'Lys-63'-linked polyubiquitination of ZAP/ZC3HAV1 that is required for its optimal binding to target mRNA. Also mediates the ubiquitination of various substrates implicated in stress granule formation, nonsense-mediated mRNA decay, nucleoside synthesis and mRNA translation and stability. The sequence is that of E3 ubiquitin/ISG15 ligase TRIM25 (Trim25) from Mus musculus (Mouse).